Reading from the N-terminus, the 857-residue chain is Leucine-rich repeat extensin-like protein 5 (857 aa).

An N-terminal signal peptide occupies residues 1 to 31 (MKTKMMMKNTSLIFVLLFITFFFTSISYSLS). An LRR 1 repeat occupies 32-53 (LTFNGDLSDNEVRLITQRQLLY). Residue N98 is glycosylated (N-linked (GlcNAc...) asparagine). LRR repeat units follow at residues 125 to 149 (IRTVAGIDLNHADIAGYLPQELGLL), 150 to 172 (TDLALFHINSNRFCGTVPHRFNR), 174 to 197 (KLLFELDLSNNRFAGIFPTVVLQL), 198 to 221 (PSLKFLDLRFNEFEGPVPRELFSK), 223 to 244 (LDAIFINHNRFRFELPDNLGDS), 246 to 267 (VSVIVVANNHFHGCIPTSLGDM), 268 to 291 (RNLEEIIFMENGFNSCLPSQIGRL), 292 to 315 (KNVTVFDFSFNELVGSLPASIGGM), 316 to 339 (VSMEQLNVAHNRFSGKIPATICQL), and 341 to 362 (RLENFTFSYNFFTGEPPVCLGL). N-linked (GlcNAc...) asparagine glycosylation is present at N293. The N-linked (GlcNAc...) asparagine glycan is linked to N344. Disordered regions lie at residues 406 to 776 (PPVV…EYSP) and 817 to 839 (YSPPPPPVIHHSQPPPPPIYEGP). 2 stretches are compositionally biased toward pro residues: residues 408–571 (VVVP…PTPI) and 579–768 (PIIP…PQSH). Residues 615 to 857 (SPPPSTPTPV…YASPPPPPFY (243 aa)) form a contains the Ser-Pro(4) repeats region.

Post-translationally, hydroxylated on proline residues in the S-P-P-P-P repeat. In terms of processing, O-glycosylated on hydroxyprolines. Expressed in roots, leaves and flowers.

The protein resides in the secreted. Its subcellular location is the cell wall. Modulates cell morphogenesis by regulating cell wall formation and assembly, and/or growth polarization. The polypeptide is Leucine-rich repeat extensin-like protein 5 (LRX5) (Arabidopsis thaliana (Mouse-ear cress)).